Consider the following 1523-residue polypeptide: Disco-interacting protein 2 homolog A (1523 aa).

The DMAP1-binding domain maps to 9–105 (EAAPLPAEVL…TSSASEDEGS (97 aa)). Residues 72-110 (KMPMPSKRRSALVHSSVETYTPPDTSSASEDEGSLRRPG) form a disordered region. The segment covering 87-99 (SVETYTPPDTSSA) has biased composition (polar residues). A phosphothreonine mark is found at Thr92 and Thr115. Residues 132 to 158 (QGSSTSSSASSTSSHPGGRPAAAPSAS) form a disordered region. Over residues 134 to 158 (SSTSSSASSTSSHPGGRPAAAPSAS) the composition is skewed to low complexity. 2 consecutive short sequence motifs (PXXP motif; required for interaction with CTTN) follow at residues 235–238 (PKRP) and 259–262 (PNQP).

The protein belongs to the DIP2 family. Interacts with FSTL1; DIP2A may act as a cell surface receptor for FSTL1. Interacts (via N-terminus) with CTTN (via SH3 domain); the interaction promotes acetylation of CTTN and is required for proper synaptic transmission. Interacts with SHANK3. In terms of tissue distribution, detected in heart, liver, spleen, lung, kidney and brain with highest levels in brain (at protein level). In adult cortex, preferentially expressed in excitatory neurons. Broadly expressed in neuronal, reproductive and vascular tissues as well as in heart, kidney, liver and lung with expression detected in neurons, mesenchyme, endothelium, smooth muscle cells and cardiomyocytes. Expressed in ectoderm-derived tissues in the developing embryo. Expressed in the developing nervous system.

The protein resides in the cell membrane. The protein localises to the mitochondrion. Its subcellular location is the cell projection. It is found in the dendritic spine. It catalyses the reaction acetate + ATP + CoA = acetyl-CoA + AMP + diphosphate. Catalyzes the de novo synthesis of acetyl-CoA in vitro. Promotes acetylation of CTTN, possibly by providing the acetyl donor, ensuring correct dendritic spine morphology and synaptic transmission. Binds to follistatin-related protein FSTL1 and may act as a cell surface receptor for FSTL1, contributing to AKT activation and subsequent FSTL1-induced survival and function of endothelial cells and cardiac myocytes. In Mus musculus (Mouse), this protein is Disco-interacting protein 2 homolog A (Dip2a).